Here is a 200-residue protein sequence, read N- to C-terminus: Ankyrin repeat-containing protein YAR1 (200 aa).

ANK repeat units lie at residues 49–78 (SDST…RANS) and 92–121 (TGNT…ADPF). Phosphoserine is present on serine 78. Residues 152–173 (VEPEDDEEDTQTEGKNSVQITK) form a disordered region. The span at 153–162 (EPEDDEEDTQ) shows a compositional bias: acidic residues. A compositionally biased stretch (polar residues) spans 164-173 (EGKNSVQITK).

Its function is as follows. Required for normal rate of cell proliferation. The polypeptide is Ankyrin repeat-containing protein YAR1 (YAR1) (Saccharomyces cerevisiae (strain ATCC 204508 / S288c) (Baker's yeast)).